Here is a 563-residue protein sequence, read N- to C-terminus: Inclusion body clearance protein IML2 (563 aa).

This sequence belongs to the IML2 family. Interacts with lipid droplet proteins.

Its subcellular location is the cytoplasm. It is found in the nucleus. Its function is as follows. Inclusion body (IB) resident protein that interacts strongly with lipid droplet (LD) proteins. Involved in LD-mediated IB clearing after protein folding stress, probably by enabling access to the IBs of an LD-stored soluble sterol derivative that acts as a chaperone in inclusion clearing. The protein is Inclusion body clearance protein IML2 of Schizosaccharomyces pombe (strain 972 / ATCC 24843) (Fission yeast).